The following is a 303-amino-acid chain: MSATPTVPITFQGLIQTLNQFWAQQGCVLIQPLDLEVGAGTFHPATFLRAIGPEGWNAAYVQPSRRPTDGRYGENPNRLQRYYQYQVAMKPAPDNIQQLYLDSLKALGIDPLVHDLRFVEDNWESPTLGAWGLGWEVWLNGMEVTQFTYFQQAGGLECRPVLGEITYGLERLCMYLQNCDNVYDLIWTYGPDGQPVTYGDVYHQNEVEQSTYNFEYADVEEMFHRFDACEREAQKLVEVNLPLPAYEQVMKASHTFNLLDARRAISVTERQRYILRVRALAQAVARAYYEQREKLGFPGAKKA.

This sequence belongs to the class-II aminoacyl-tRNA synthetase family. In terms of assembly, tetramer of two alpha and two beta subunits.

It localises to the cytoplasm. It carries out the reaction tRNA(Gly) + glycine + ATP = glycyl-tRNA(Gly) + AMP + diphosphate. The protein is Glycine--tRNA ligase alpha subunit of Stenotrophomonas maltophilia (strain K279a).